A 208-amino-acid chain; its full sequence is Small ribosomal subunit protein uS4 (208 aa).

One can recognise an S4 RNA-binding domain in the interval 98–159 (RRLDNVAYRL…KSRKVAAISE (62 aa)).

It belongs to the universal ribosomal protein uS4 family. In terms of assembly, part of the 30S ribosomal subunit. Contacts protein S5. The interaction surface between S4 and S5 is involved in control of translational fidelity.

Its function is as follows. One of the primary rRNA binding proteins, it binds directly to 16S rRNA where it nucleates assembly of the body of the 30S subunit. With S5 and S12 plays an important role in translational accuracy. This Citrifermentans bemidjiense (strain ATCC BAA-1014 / DSM 16622 / JCM 12645 / Bem) (Geobacter bemidjiensis) protein is Small ribosomal subunit protein uS4.